A 1044-amino-acid chain; its full sequence is Ras GTPase-activating protein 1 (1044 aa).

Met1 is subject to N-acetylmethionine. The segment at 1–160 (MMAAEAGGEE…DEGDSLDGPE (160 aa)) is hydrophobic. The SH2 1 domain occupies 178–269 (WYHGKLDRTI…LKGEKLLYPV (92 aa)). The region spanning 276–338 (EDRRRVRAIL…VEDLVEEVGR (63 aa)) is the SH3 domain. An SH2 2 domain is found at 348-438 (WFHGKISKQE…VEGYYLKEPV (91 aa)). The region spanning 471 to 574 (NIVKKGYLLK…WMKGLQAFCN (104 aa)) is the PH domain. The region spanning 574–687 (NLRKSSPGTS…QKGHATDEWF (114 aa)) is the C2 domain. A Phosphotyrosine modification is found at Tyr612. 2 consecutive repeats follow at residues 646 to 664 (PDIN…KSKD) and 665 to 683 (PDIL…GHAT). The Ras-GAP domain maps to 761–971 (KLESLLLCTL…HRMIMFLDEL (211 aa)). The residue at position 828 (Ser828) is a Phosphoserine.

Interacts with SQSTM1. Interacts with SPSB1; the interaction does not promote degradation. Interacts with CAV2 (tyrosine phosphorylated form). Directly interacts with NCK1. Interacts with PDGFRB (tyrosine phosphorylated). Interacts (via SH2 domain) with the 'Tyr-9' phosphorylated form of PDPK1. Interacts with tyrosine-phosphorylated EPHB4. Post-translationally, phosphorylated by SRC and LCK. The phosphorylation SRC inhibits its ability to stimulate the Ras-GTPase activity, whereas phosphorylation by LCK does not display any effect on stimulation activity.

It is found in the cytoplasm. Inhibitory regulator of the Ras-cyclic AMP pathway. Stimulates the GTPase of normal but not oncogenic Ras p21. The polypeptide is Ras GTPase-activating protein 1 (RASA1) (Bos taurus (Bovine)).